The chain runs to 494 residues: Amidophosphoribosyltransferase (494 aa).

A propeptide spanning residues 1–10 is cleaved from the precursor; sequence MFNYSGLNEE. Cys11 functions as the Nucleophile in the catalytic mechanism. One can recognise a Glutamine amidotransferase type-2 domain in the interval 11–231; sequence CGVFGIWNHP…AGEYVVINDK (221 aa). Ser294, Asp356, and Asp357 together coordinate Mg(2+).

In the C-terminal section; belongs to the purine/pyrimidine phosphoribosyltransferase family. It depends on Mg(2+) as a cofactor.

It catalyses the reaction 5-phospho-beta-D-ribosylamine + L-glutamate + diphosphate = 5-phospho-alpha-D-ribose 1-diphosphate + L-glutamine + H2O. It participates in purine metabolism; IMP biosynthesis via de novo pathway; N(1)-(5-phospho-D-ribosyl)glycinamide from 5-phospho-alpha-D-ribose 1-diphosphate: step 1/2. Functionally, catalyzes the formation of phosphoribosylamine from phosphoribosylpyrophosphate (PRPP) and glutamine. The sequence is that of Amidophosphoribosyltransferase from Staphylococcus aureus (strain MRSA252).